Consider the following 66-residue polypeptide: Small vasohibin-binding protein (66 aa).

The segment covering 1–23 has biased composition (basic and acidic residues); that stretch reads MDPPARKEKTKVKESVSRVEKAK. Positions 1-31 are disordered; the sequence is MDPPARKEKTKVKESVSRVEKAKQKSAQQEL. The stretch at 5–52 forms a coiled coil; that stretch reads ARKEKTKVKESVSRVEKAKQKSAQQELKQRQRAEIYALNRVMTELEQQ.

The protein belongs to the SVBP family. Interacts with VASH1 and VASH2.

The protein resides in the cytoplasm. It is found in the secreted. It localises to the cytoskeleton. In terms of biological role, enhances the tyrosine carboxypeptidase activity of VASH1 and VASH2, thereby promoting the removal of the C-terminal tyrosine residue of alpha-tubulin. This activity is critical for spindle function and accurate chromosome segregation during mitosis since microtubule detyronisation regulates mitotic spindle length and postioning. Also required to enhance the solubility and secretion of VASH1 and VASH2. Plays a role in axon and excitatory synapse formation. This is Small vasohibin-binding protein from Homo sapiens (Human).